The following is a 1415-amino-acid chain: DNA-directed RNA polymerase subunit beta' (1415 aa).

Residues C72, C74, C87, and C90 each coordinate Zn(2+). Mg(2+)-binding residues include D463, D465, and D467. C811, C885, C892, and C895 together coordinate Zn(2+).

Belongs to the RNA polymerase beta' chain family. In terms of assembly, the RNAP catalytic core consists of 2 alpha, 1 beta, 1 beta' and 1 omega subunit. When a sigma factor is associated with the core the holoenzyme is formed, which can initiate transcription. Requires Mg(2+) as cofactor. It depends on Zn(2+) as a cofactor.

The enzyme catalyses RNA(n) + a ribonucleoside 5'-triphosphate = RNA(n+1) + diphosphate. In terms of biological role, DNA-dependent RNA polymerase catalyzes the transcription of DNA into RNA using the four ribonucleoside triphosphates as substrates. The protein is DNA-directed RNA polymerase subunit beta' of Cereibacter sphaeroides (strain ATCC 17023 / DSM 158 / JCM 6121 / CCUG 31486 / LMG 2827 / NBRC 12203 / NCIMB 8253 / ATH 2.4.1.) (Rhodobacter sphaeroides).